We begin with the raw amino-acid sequence, 326 residues long: tRNA-modifying protein YgfZ (326 aa).

W27 and W189 together coordinate folate.

Belongs to the tRNA-modifying YgfZ family.

The protein localises to the cytoplasm. Functionally, folate-binding protein involved in regulating the level of ATP-DnaA and in the modification of some tRNAs. It is probably a key factor in regulatory networks that act via tRNA modification, such as initiation of chromosomal replication. In Escherichia coli O127:H6 (strain E2348/69 / EPEC), this protein is tRNA-modifying protein YgfZ.